The chain runs to 391 residues: 3-demethoxyubiquinol 3-hydroxylase (391 aa).

The protein belongs to the UbiH/COQ6 family. As to quaternary structure, component of the Ubi complex metabolon, which regroups five ubiquinone biosynthesis proteins (UbiE, UbiF, UbiG, UbiH and UbiI) and two accessory factors (UbiK and the lipid-binding protein UbiJ). It depends on FAD as a cofactor.

The protein resides in the cytoplasm. The catalysed reaction is a 5-methoxy-2-methyl-3-(all-trans-polyprenyl)benzene-1,4-diol + AH2 + O2 = a 3-demethylubiquinol + A + H2O. Its pathway is cofactor biosynthesis; ubiquinone biosynthesis. Catalyzes the hydroxylation of 2-octaprenyl-3-methyl-6-methoxy-1,4-benzoquinol during ubiquinone biosynthesis. The polypeptide is 3-demethoxyubiquinol 3-hydroxylase (ubiF) (Escherichia coli (strain K12)).